Reading from the N-terminus, the 279-residue chain is Large ribosomal subunit protein uL2 (279 aa).

Disordered stretches follow at residues 1 to 43 (MGIK…TAGR) and 207 to 279 (KAGR…PGKH). Over residues 8-22 (PTTNGRRNMTASDFS) the composition is skewed to polar residues. Residues 23-33 (EITKTKPEKSL) show a composition bias toward basic and acidic residues. Polar residues predominate over residues 34–43 (LDSQSHTAGR). Basic residues-rich tracts occupy residues 209–219 (GRTRWQGKRPT) and 254–279 (TLGKKTRNKKARSNKLIVRGRRPGKH).

This sequence belongs to the universal ribosomal protein uL2 family. As to quaternary structure, part of the 50S ribosomal subunit. Forms a bridge to the 30S subunit in the 70S ribosome.

In terms of biological role, one of the primary rRNA binding proteins. Required for association of the 30S and 50S subunits to form the 70S ribosome, for tRNA binding and peptide bond formation. It has been suggested to have peptidyltransferase activity; this is somewhat controversial. Makes several contacts with the 16S rRNA in the 70S ribosome. This Lactiplantibacillus plantarum (strain ATCC BAA-793 / NCIMB 8826 / WCFS1) (Lactobacillus plantarum) protein is Large ribosomal subunit protein uL2.